A 575-amino-acid chain; its full sequence is Proline--tRNA ligase (575 aa).

It belongs to the class-II aminoacyl-tRNA synthetase family. ProS type 1 subfamily. As to quaternary structure, homodimer.

It is found in the cytoplasm. It catalyses the reaction tRNA(Pro) + L-proline + ATP = L-prolyl-tRNA(Pro) + AMP + diphosphate. In terms of biological role, catalyzes the attachment of proline to tRNA(Pro) in a two-step reaction: proline is first activated by ATP to form Pro-AMP and then transferred to the acceptor end of tRNA(Pro). As ProRS can inadvertently accommodate and process non-cognate amino acids such as alanine and cysteine, to avoid such errors it has two additional distinct editing activities against alanine. One activity is designated as 'pretransfer' editing and involves the tRNA(Pro)-independent hydrolysis of activated Ala-AMP. The other activity is designated 'posttransfer' editing and involves deacylation of mischarged Ala-tRNA(Pro). The misacylated Cys-tRNA(Pro) is not edited by ProRS. This Saccharophagus degradans (strain 2-40 / ATCC 43961 / DSM 17024) protein is Proline--tRNA ligase.